Consider the following 565-residue polypeptide: Membrane protein insertase YidC (565 aa).

Helical transmembrane passes span 6 to 26 (VLLIFSWLTVATLLWMDWSKN), 348 to 368 (LMALIGQGLFWILSHLNSLLH), 370 to 390 (WGWAIVGLVVLLRIAMYPLSA), 437 to 457 (GGCFPILIQMPIFFALYWVLV), 479 to 499 (PYFILPLLNIVIMWATQKLTP), and 516 to 536 (PLIFGVMMAFVPSGLALYWVI).

It belongs to the OXA1/ALB3/YidC family. Type 1 subfamily. In terms of assembly, interacts with the Sec translocase complex via SecD. Specifically interacts with transmembrane segments of nascent integral membrane proteins during membrane integration.

It localises to the cell inner membrane. In terms of biological role, required for the insertion and/or proper folding and/or complex formation of integral membrane proteins into the membrane. Involved in integration of membrane proteins that insert both dependently and independently of the Sec translocase complex, as well as at least some lipoproteins. Aids folding of multispanning membrane proteins. This chain is Membrane protein insertase YidC, found in Xylella fastidiosa (strain M23).